A 643-amino-acid polypeptide reads, in one-letter code: MPTIKFIDGTCRVYPGSISVLDILKDVSPNSVQDFMFGCVNGISVDRNAIVTNDSIVKFVYKTDQSTLDIIRYSCICLLGKAVKKLWPSSKIGESDVLENGFFCDIEVDFSFNETSLHLLEACMRQMINKKYKIYTKTFSLKKASTIFKNRNETYKLFLLDRLVNFSNQVVSLCFHEEYIDIQKKISVPNIFLCRNFRLQKFSGVYWKGKRENKVLQRIYGTSWITRIQLEKHLDNVKKLDSRDHRKISKILDLYHIQEDLPGMIFWHRNGWIVFQELKKLIRVKLRKYNYQEVKTPVMMNKKIWKDSGHLDNYKESMFMVCSSNFEYGIKPMNCPGHVQIFNHVVRSYRDLPIRISEFGSCHRNEPSGALHGLMRIRNFTQDDAHIFCREDQICSEVSNCIRMVYEIYKIFGFKKILVRLSTRPKNRIGNDNIWDKAENDLATSLRESKIEFEYQHGEGAFYGPKIELSLFDSLGRVWQCATIQLDFCLPINLKAFYIDHNNERKVPIIVHRAVLGSIERFIGILIEEYIGNFPTWLAPIQVVLANVNSNHLQYIKLLYKEFYALGIRSEIDSRNETISYKIREHIARKIPYIIICGDKEVKNNTITLRTRSGKNFYCIDVQFFISKLCKEINSYSCSLMEE.

The TGS domain maps to 1-61; that stretch reads MPTIKFIDGT…TNDSIVKFVY (61 aa). The segment at 244–535 is catalytic; that stretch reads DHRKISKILD…LIEEYIGNFP (292 aa). Zn(2+) contacts are provided by Cys335, His386, and His512.

Belongs to the class-II aminoacyl-tRNA synthetase family. As to quaternary structure, homodimer. Requires Zn(2+) as cofactor.

It is found in the cytoplasm. It carries out the reaction tRNA(Thr) + L-threonine + ATP = L-threonyl-tRNA(Thr) + AMP + diphosphate + H(+). Functionally, catalyzes the attachment of threonine to tRNA(Thr) in a two-step reaction: L-threonine is first activated by ATP to form Thr-AMP and then transferred to the acceptor end of tRNA(Thr). Also edits incorrectly charged L-seryl-tRNA(Thr). This is Threonine--tRNA ligase from Buchnera aphidicola subsp. Baizongia pistaciae (strain Bp).